The following is a 71-amino-acid chain: Small ribosomal subunit protein bS21 (71 aa).

The segment at 37–71 (HYEKPTQERKRKAAAAVKRHMKRLSREQARRRRLY) is disordered. Basic residues predominate over residues 45-71 (RKRKAAAAVKRHMKRLSREQARRRRLY).

Belongs to the bacterial ribosomal protein bS21 family.

The protein is Small ribosomal subunit protein bS21 of Alkalilimnicola ehrlichii (strain ATCC BAA-1101 / DSM 17681 / MLHE-1).